The chain runs to 495 residues: Keratin, type II cuticular 87 (495 aa).

The segment at 1–111 (MSCFSSRLGA…PNAQCVKHEE (111 aa)) is head. The IF rod domain maps to 111–422 (EKEQIKCLNS…RLLEGEEQRL (312 aa)). The segment at 112–146 (KEQIKCLNSKFAAFIDKVRFLEQQNKLLETKWQFY) is coil 1A. A linker 1 region spans residues 147 to 156 (QNRKCCESNM). A coil 1B region spans residues 157–257 (EPLFEGYIEA…YEEETRLLHS (101 aa)). Residues 258 to 274 (HISDTSVVVKMDNSRDL) form a linker 12 region. Residues 275–418 (NMDCVVAEIK…ITYRRLLEGE (144 aa)) form a coil 2 region. Residues 419–494 (EQRLCEGVGS…TCGSSRSVRF (76 aa)) form a tail region.

The protein belongs to the intermediate filament family. In terms of assembly, heterotetramer of two type I and two type II keratins.

The polypeptide is Keratin, type II cuticular 87 (Mus musculus (Mouse)).